Consider the following 121-residue polypeptide: Heimdall profilin (121 aa).

This sequence belongs to the Asgard profilin family.

The protein resides in the cytoplasm. The protein localises to the cytoskeleton. Functionally, binds to actin and affects the structure of the cytoskeleton. At high concentrations inhibits spontaneous rabbit actin nucleation. This strongly suggests this archaea has a profilin-regulated actin system, and actin-type genes can be identified in this organism. The chain is Heimdall profilin from Heimdallarchaeota archaeon (strain LC_2).